A 383-amino-acid chain; its full sequence is 8-amino-7-oxononanoate synthase (383 aa).

Substrate-binding residues include R27 and R34. Residue 114–115 (GY) coordinates pyridoxal 5'-phosphate. H139 provides a ligand contact to substrate. Residues S187, 212–215 (DDAH), and 232–235 (TLSK) contribute to the pyridoxal 5'-phosphate site. Position 235 is an N6-(pyridoxal phosphate)lysine (K235). T344 is a binding site for substrate.

The protein belongs to the class-II pyridoxal-phosphate-dependent aminotransferase family. BioF subfamily. As to quaternary structure, homodimer. It depends on pyridoxal 5'-phosphate as a cofactor.

The enzyme catalyses 6-carboxyhexanoyl-[ACP] + L-alanine + H(+) = (8S)-8-amino-7-oxononanoate + holo-[ACP] + CO2. It participates in cofactor biosynthesis; biotin biosynthesis. Catalyzes the decarboxylative condensation of pimeloyl-[acyl-carrier protein] and L-alanine to produce 8-amino-7-oxononanoate (AON), [acyl-carrier protein], and carbon dioxide. The polypeptide is 8-amino-7-oxononanoate synthase (Methylorubrum extorquens (strain PA1) (Methylobacterium extorquens)).